A 300-amino-acid polypeptide reads, in one-letter code: GTP cyclohydrolase FolE2 (300 aa).

Belongs to the GTP cyclohydrolase IV family.

The catalysed reaction is GTP + H2O = 7,8-dihydroneopterin 3'-triphosphate + formate + H(+). Its pathway is cofactor biosynthesis; 7,8-dihydroneopterin triphosphate biosynthesis; 7,8-dihydroneopterin triphosphate from GTP: step 1/1. In terms of biological role, converts GTP to 7,8-dihydroneopterin triphosphate. The sequence is that of GTP cyclohydrolase FolE2 from Bacillus licheniformis (strain ATCC 14580 / DSM 13 / JCM 2505 / CCUG 7422 / NBRC 12200 / NCIMB 9375 / NCTC 10341 / NRRL NRS-1264 / Gibson 46).